We begin with the raw amino-acid sequence, 495 residues long: DNA-directed RNA polymerase subunit alpha (495 aa).

The segment at 1 to 301 (MPYIKHIETK…RMLASLQAPP (301 aa)) is alpha N-terminal domain (alpha-NTD). Disordered stretches follow at residues 159 to 227 (SLVP…EAPH) and 391 to 495 (QEQV…PEET). The segment at 170–237 (PRDPLEPEND…IPSMRDDHMT (68 aa)) is insert. Basic and acidic residues predominate over residues 172–186 (DPLEPENDSKSETKS). 2 stretches are compositionally biased toward polar residues: residues 207–219 (VNAQ…SNST) and 391–403 (QEQV…SQIA). Residues 317–495 (AKEIALTPIE…LSSSQNPEET (179 aa)) form an alpha C-terminal domain (alpha-CTD) region. Residues 417–426 (RPIDSKETRR) show a composition bias toward basic and acidic residues. Over residues 444-453 (RKSSKTKVKA) the composition is skewed to basic residues. 2 stretches are compositionally biased toward polar residues: residues 464-473 (KSANLQQAEE) and 486-495 (LSSSQNPEET).

It belongs to the RNA polymerase alpha chain family. As to quaternary structure, in plastids the minimal PEP RNA polymerase catalytic core is composed of four subunits: alpha, beta, beta', and beta''. When a (nuclear-encoded) sigma factor is associated with the core the holoenzyme is formed, which can initiate transcription.

The protein resides in the plastid. It localises to the chloroplast. The catalysed reaction is RNA(n) + a ribonucleoside 5'-triphosphate = RNA(n+1) + diphosphate. DNA-dependent RNA polymerase catalyzes the transcription of DNA into RNA using the four ribonucleoside triphosphates as substrates. In Nephroselmis olivacea (Green alga), this protein is DNA-directed RNA polymerase subunit alpha.